Consider the following 757-residue polypeptide: MADSSFSLPPLCERISYTNYFLRAVYLTVLGLFFSLLLHRIRHTSEYDNVWLVAFFCESCFFLVCLLITCLKWSPADTKPFPDRLDERVHDLPSVDMFVPTADPVREPPIMVVDTVLSLLAVNYPANKLACYVSDDGCSPLTYFSLKEASKFAKIWVPFCKKYNTRVRAPSRYFLKPISVATEDYEFNRDWEKTKREYEKLRRKVEDATGDSHMLDVEDDFEAFSNTKPNDHSTLVKVVWENKGGVGDEKEIPHIIYISREKRPNYVHNQKCGAMNFLARVSGLMTNAPYILNVDCDMYANDADVVRQAMCILLQESLNMKHCAFVQFRQEFYDSSTELIVVLQSHLGRGIAGIQGPIYIGSGCVHTRRVMYGLSPDDFEVDGSLSSVATREFLVKDSLARRFGNSKEMMKSVVDAIQRNPNPQNILTNSIEAAREVGHCQYEYQTSWGNTIGWLYDSVAEDLNTSIGIHSRGWTSSYISPDTPAFLGSMPAGVPEALLQQRRWATGWIEILFNKQSPLRGLFSKKIRFRQRLAYLCIITCLRSIPELIYCLLPAYCLLHNSTLFPKGLYLGITVTLVGIHCLYTLWEFMSLGYSVQSWLVSQSVWRIVATSSWLFSIFDITLKLLGISETVFIITKKTVAGTKSALGSGPSQGEDVGPNSDLFKFEFDGSLCFLPGTFIVLVNIAALAVFSVGLQRSSYSHEGGGSGLAEACGCVLVMMLFLPFLMGLFKKGKYGTPLSTLSIAGFLAVLFVVFSV.

2 consecutive transmembrane segments (helical) span residues Thr-18–Leu-38 and Val-50–Cys-70. Residue Asp-136 is part of the active site. Positions Glu-186–Asp-216 form a coiled coil. Residue Asp-462 is part of the active site. The next 6 membrane-spanning stretches (helical) occupy residues Leu-533–Leu-553, Leu-569–Phe-589, Leu-615–Ile-635, Phe-674–Gly-694, Ala-710–Phe-730, and Thr-737–Val-757.

This sequence belongs to the glycosyltransferase 2 family. Plant cellulose synthase-like B subfamily. As to expression, expressed in young seedlings, primarily in the vascular tissue.

Its subcellular location is the golgi apparatus membrane. In terms of biological role, thought to be a Golgi-localized beta-glycan synthase that polymerize the backbones of noncellulosic polysaccharides (hemicelluloses) of plant cell wall. This Arabidopsis thaliana (Mouse-ear cress) protein is Cellulose synthase-like protein B1 (CSLB1).